We begin with the raw amino-acid sequence, 292 residues long: Protease HtpX (292 aa).

2 helical membrane-spanning segments follow: residues 4–24 (IVLFLLTNLAVMLIFSLILFL) and 32–52 (IYGLLIMSGLFGFSGSILSLI). His139 lines the Zn(2+) pocket. Glu140 is an active-site residue. Residue His143 participates in Zn(2+) binding. 2 consecutive transmembrane segments (helical) span residues 147 to 167 (GDMITMTLVQGVVNTFVIFIS) and 193 to 213 (FVYFLVSTFLELIFGILASII). A Zn(2+)-binding site is contributed by Glu222.

Belongs to the peptidase M48B family. It depends on Zn(2+) as a cofactor.

It localises to the cell membrane. The protein is Protease HtpX of Buchnera aphidicola subsp. Acyrthosiphon pisum (strain 5A).